A 234-amino-acid chain; its full sequence is Thymidylate kinase (234 aa).

An ATP-binding site is contributed by 21 to 28 (GGEGTGKS).

It belongs to the thymidylate kinase family.

The enzyme catalyses dTMP + ATP = dTDP + ADP. Its function is as follows. Phosphorylation of dTMP to form dTDP in both de novo and salvage pathways of dTTP synthesis. This chain is Thymidylate kinase, found in Rhizobium meliloti (strain 1021) (Ensifer meliloti).